The chain runs to 83 residues: Mu-theraphotoxin-Hhn2g (83 aa).

The first 21 residues, 1–21 (MKASMYLALAGLVLLFVVGYA), serve as a signal peptide directing secretion. Residues 22 to 48 (SESEEKEFPRELLSKIFAVDDFKGEER) constitute a propeptide that is removed on maturation. 2 cysteine pairs are disulfide-bonded: Cys-50-Cys-65 and Cys-57-Cys-70. Position 81 is a leucine amide (Leu-81).

Belongs to the neurotoxin 10 (Hwtx-1) family. 15 (Hntx-3) subfamily. In terms of assembly, monomer. As to expression, expressed by the venom gland.

The protein resides in the secreted. In terms of biological role, lethal neurotoxin. Selectively blocks tetrodotoxin-sensitive voltage-gated sodium channels (Nav). Does not affect tetrodotoxin-resistant voltage-gated sodium channels or calcium channels. The polypeptide is Mu-theraphotoxin-Hhn2g (Cyriopagopus hainanus (Chinese bird spider)).